Here is an 829-residue protein sequence, read N- to C-terminus: MKTAVFGRDSGEPGSPCGAPPSLTFTPPATLVPPTHHHSRSTNRGGVSGTGGGGSGGLQGAPGAGGPRASHSSRRTSRLHNNVSALGVLSLGADVLPEYKLQPTRIHHCTIVHYSPFKAVWDWIILLLVIYTAVFTPYVAAFLLRELQDTAKKSRFTEPLEIVDLIVDIMFIVDIIINFRTTYVNENDEACQVVSDPGKIATHYFKGWFIIDMVAAVPFDLLLVSTNSDETTTLIGLLKTARLLRLVRVARKLDRYSEYGAAVLLLLMATFALIAHWLACIWYAIGSAELSHKEYTWLHQLSKQLAQPYTSTNGTIPTGGPTLKSRYVTSLYFTLSTITSIGFGNVSATTDSEKIFTIIMMILGSLMYASVFGNVSAIIQRLYSGTARYHTEMSRLREFIRFHQIPNPLRQRLEEYFQHAWSYTNGIDMNLVLKGFPDCLQADICLHLNRNLLSGCAAFAGSTPGCLRALSMRFRTTHSPPGDTLVHRGDILTGLYFIARGSVEILNDDNTVMGILGKDDIFGENPLLYDEVGKSSCNVRALTYCDLHKILRDDLLDVLDMYPEFAETFCKNLTITYNLRDDAQSLRKKFDRHKLLRMSSSMNKDRYTTPPDGDHGNAAVRRSAESVSRCDSNPIDRRQSAGSRSSSRCSPPHAALTATRSEATPLLRRSTNHHEEDDALFDDIRAFARGNTVTMSPTVAGNSVSPTTAIHNDGIHSQQLSDRSDDYEERRANMFGRRLESIESQMERMQNKFNSDMETLIKLVKEQSIIRNNGSSNEEPNARYRPNNYISSAIRLPNGGGGGVVDEMRVSRLSSHEPPTPTQETDTIL.

The segment at 1–76 (MKTAVFGRDS…PRASHSSRRT (76 aa)) is disordered. Topologically, residues 1-123 (MKTAVFGRDS…YSPFKAVWDW (123 aa)) are cytoplasmic. The span at 46 to 66 (GVSGTGGGGSGGLQGAPGAGG) shows a compositional bias: gly residues. The helical transmembrane segment at 124–144 (IILLLVIYTAVFTPYVAAFLL) threads the bilayer. Residues 145–158 (RELQDTAKKSRFTE) are Extracellular-facing. Residues 159 to 179 (PLEIVDLIVDIMFIVDIIINF) traverse the membrane as a helical segment. Residues 180–203 (RTTYVNENDEACQVVSDPGKIATH) lie on the Cytoplasmic side of the membrane. Residues 204 to 224 (YFKGWFIIDMVAAVPFDLLLV) form a helical membrane-spanning segment. Residues 225–234 (STNSDETTTL) lie on the Extracellular side of the membrane. The chain crosses the membrane as a helical; Voltage-sensor span at residues 235–255 (IGLLKTARLLRLVRVARKLDR). The Cytoplasmic segment spans residues 256–261 (YSEYGA). Residues 262-282 (AVLLLLMATFALIAHWLACIW) traverse the membrane as a helical segment. Topologically, residues 283–327 (YAIGSAELSHKEYTWLHQLSKQLAQPYTSTNGTIPTGGPTLKSRY) are extracellular. The N-linked (GlcNAc...) asparagine glycan is linked to N313. An intramembrane region (pore-forming) is located at residues 328 to 348 (VTSLYFTLSTITSIGFGNVSA). At 349 to 354 (TTDSEK) the chain is on the extracellular side. A helical membrane pass occupies residues 355–375 (IFTIIMMILGSLMYASVFGNV). The Cytoplasmic segment spans residues 376–829 (SAIIQRLYSG…TPTQETDTIL (454 aa)). 458-559 (AFAGSTPGCL…ILRDDLLDVL (102 aa)) contacts a nucleoside 3',5'-cyclic phosphate. The tract at residues 601–674 (SMNKDRYTTP…PLLRRSTNHH (74 aa)) is disordered. The span at 603–615 (NKDRYTTPPDGDH) shows a compositional bias: basic and acidic residues. Low complexity predominate over residues 640–650 (SAGSRSSSRCS).

This sequence belongs to the potassium channel family. H (Eag) (TC 1.A.1.20) subfamily. Kv11.1/KCNH2 sub-subfamily. As to quaternary structure, the potassium channel is composed of a homo- or heterotetrameric complex. Interacts with dnj-1; dnj-1 chaperone promotes tetramerization.

The protein resides in the cell membrane. Its function is as follows. Pore-forming (alpha) subunit of voltage-gated inwardly rectifying potassium channel. Channel properties are modulated by cAMP and subunit assembly. Regulates the movements of the male's copulatory spicules before and during male mating behavior. The protein is Potassium voltage-gated channel unc-103 of Caenorhabditis elegans.